The following is a 423-amino-acid chain: Enolase (423 aa).

Residue glutamine 164 participates in (2R)-2-phosphoglycerate binding. Catalysis depends on glutamate 206, which acts as the Proton donor. Aspartate 243, glutamate 289, and aspartate 316 together coordinate Mg(2+). Residues lysine 341, arginine 370, serine 371, and lysine 392 each contribute to the (2R)-2-phosphoglycerate site. The active-site Proton acceptor is lysine 341.

Belongs to the enolase family. It depends on Mg(2+) as a cofactor.

The protein resides in the cytoplasm. The protein localises to the secreted. Its subcellular location is the cell surface. It catalyses the reaction (2R)-2-phosphoglycerate = phosphoenolpyruvate + H2O. It functions in the pathway carbohydrate degradation; glycolysis; pyruvate from D-glyceraldehyde 3-phosphate: step 4/5. Catalyzes the reversible conversion of 2-phosphoglycerate (2-PG) into phosphoenolpyruvate (PEP). It is essential for the degradation of carbohydrates via glycolysis. This chain is Enolase, found in Desulfotalea psychrophila (strain LSv54 / DSM 12343).